A 210-amino-acid chain; its full sequence is Large ribosomal subunit protein uL5 (210 aa).

A disordered region spans residues 188–210; it reads AKDDPKKAKTKRGPAYYAKKKKK. Over residues 195 to 210 the composition is skewed to basic residues; that stretch reads AKTKRGPAYYAKKKKK.

Belongs to the universal ribosomal protein uL5 family. Part of the 50S ribosomal subunit; part of the 5S rRNA/L5/L18/L25 subcomplex. Contacts the 5S rRNA and the P site tRNA. Forms a bridge to the 30S subunit in the 70S ribosome.

This is one of the proteins that bind and probably mediate the attachment of the 5S RNA into the large ribosomal subunit, where it forms part of the central protuberance. In the 70S ribosome it contacts protein S13 of the 30S subunit (bridge B1b), connecting the 2 subunits; this bridge is implicated in subunit movement. Contacts the P site tRNA; the 5S rRNA and some of its associated proteins might help stabilize positioning of ribosome-bound tRNAs. The protein is Large ribosomal subunit protein uL5 of Cutibacterium acnes (strain DSM 16379 / KPA171202) (Propionibacterium acnes).